Consider the following 1134-residue polypeptide: Nck-associated protein 1-like (1134 aa).

The tract at residues 638–671 is disordered; sequence KAKNKKSMKQRQAPRKGEPERDKPGAESHRKNRS. Residues 639-651 are compositionally biased toward basic residues; the sequence is AKNKKSMKQRQAP. Over residues 652–666 the composition is skewed to basic and acidic residues; it reads RKGEPERDKPGAESH. The helical transmembrane segment at 999-1019 threads the bilayer; the sequence is LLLIFLAVSLPLLATDPSSFF.

As to quaternary structure, in hematopoietic cells, component of the WAVE2 complex composed of ABI1, CYFIP1/SRA1, NCKAP1L/HEM1 and WASF2/WAVE2. Interacts with ARHGAP4, PIK3C3/VPS34 and PPP1R12A/MYPT1. Interacts with mammalian target of rapamycin complex 2 (mTORC2) components, including MTOR and RICTOR. Predominantly expressed in developing and mature hematopoietic cells. Also detected in urogenital tissues, including testis.

It is found in the membrane. The protein resides in the cytoplasm. Essential hematopoietic-specific regulator of the actin cytoskeleton. Controls lymphocyte development, activation, proliferation and homeostasis, erythrocyte membrane stability, as well as phagocytosis and migration by neutrophils and macrophages. Component of the WAVE2 complex which signals downstream of RAC to stimulate F-actin polymerization. Required for stabilization and/or translation of the WAVE2 complex proteins in hematopoietic cells. Within the WAVE2 complex, enables the cortical actin network to restrain excessive degranulation and granule release by T-cells. Required for efficient T-lymphocyte and neutrophil migration. Exhibits complex cycles of activation and inhibition to generate waves of propagating the assembly with actin. Also involved in mechanisms WAVE independent to regulate myosin and actin polymerization during neutrophil chemotaxis. In T-cells, required for proper mechanistic target of rapamycin complex 2 (mTORC2)-dependent AKT phosphorylation, cell proliferation and cytokine secretion, including that of IL2 and TNF. The protein is Nck-associated protein 1-like of Mus musculus (Mouse).